The sequence spans 336 residues: Iron(3+)-hydroxamate import system permease protein FhuG (336 aa).

9 consecutive transmembrane segments (helical) span residues 9–29 (LIVMAVTFLLIVVVFFISLNL), 63–83 (IILSLLVGAGISVAGAILQSV), 91–111 (PGILGINAGGSLAVVLFIYFF), 124–144 (FMLPFSALAGAILAAFLIYIL), 155–175 (LILVGIGVNAGFNALLLIFQL), 193–213 (IWGANWNMIWAILPWIVILLL), 245–265 (ILLLAAVTLAASCVAAAGGIA), 285–305 (TLIPVSAFIGSFLFLLADTLA), and 313–333 (EIPVGLVISVLGAPYFIYLLM).

This sequence belongs to the binding-protein-dependent transport system permease family. FecCD subfamily. The complex is composed of an ATP-binding protein (FhuC), two transmembrane proteins (FhuB and FhuG) and a solute-binding protein (FhuD or YxeB).

Its subcellular location is the cell membrane. Its function is as follows. Part of the ABC transporter complex FhuBGCD involved in iron(3+)-hydroxamate import. Responsible for the translocation of the substrate across the membrane. This Bacillus subtilis (strain 168) protein is Iron(3+)-hydroxamate import system permease protein FhuG (fhuG).